A 501-amino-acid polypeptide reads, in one-letter code: Melianol synthase CYP71BQ5 (501 aa).

Residues 1 to 21 (MEFRLPVLLSFLLFFLMLVRH) form a helical membrane-spanning segment. A heme-binding site is contributed by C439.

It belongs to the cytochrome P450 family. The cofactor is heme. In terms of tissue distribution, mainly expressed in petioles and roots, and, to a lower extent, in leaves.

The protein resides in the membrane. It carries out the reaction dihydroniloticin + 2 reduced [NADPH--hemoprotein reductase] + 2 O2 = melianol + 2 oxidized [NADPH--hemoprotein reductase] + 3 H2O + 2 H(+). It participates in secondary metabolite biosynthesis; terpenoid biosynthesis. In terms of biological role, monooxygenase involved in the biosynthesis of limonoids triterpene natural products such as azadirachtin, an antifeedant widely used as bioinsecticide, and possessing many medicinal applications including anti-tumoral, anti-malarial, anti-rheumatic, antibacterial, anti-inflammatory, anti-pyretic and diuretic effects. Catalyzes the conversion of dihydroniloticin to the protolimonoid melianol. The protein is Melianol synthase CYP71BQ5 of Melia azedarach (Chinaberry tree).